Consider the following 590-residue polypeptide: Aspartate--tRNA(Asp/Asn) ligase (590 aa).

Glutamate 178 contributes to the L-aspartate binding site. The interval 202-205 (QIYK) is aspartate. Arginine 224 serves as a coordination point for L-aspartate. ATP-binding positions include 224–226 (RDE) and glutamine 233. L-aspartate is bound at residue histidine 453. Glutamate 487 contributes to the ATP binding site. Residue arginine 494 participates in L-aspartate binding. 539–542 (GLDR) is an ATP binding site.

It belongs to the class-II aminoacyl-tRNA synthetase family. Type 1 subfamily. Homodimer.

It is found in the cytoplasm. It carries out the reaction tRNA(Asx) + L-aspartate + ATP = L-aspartyl-tRNA(Asx) + AMP + diphosphate. Aspartyl-tRNA synthetase with relaxed tRNA specificity since it is able to aspartylate not only its cognate tRNA(Asp) but also tRNA(Asn). Reaction proceeds in two steps: L-aspartate is first activated by ATP to form Asp-AMP and then transferred to the acceptor end of tRNA(Asp/Asn). The sequence is that of Aspartate--tRNA(Asp/Asn) ligase from Treponema denticola (strain ATCC 35405 / DSM 14222 / CIP 103919 / JCM 8153 / KCTC 15104).